The sequence spans 547 residues: Methionine--tRNA ligase (547 aa).

A 'HIGH' region motif is present at residues 15–25 (PYANGSLHLGH). Cys146, Cys149, Cys159, and Cys162 together coordinate Zn(2+). The 'KMSKS' region signature appears at 332 to 336 (KMSKS). Lys335 lines the ATP pocket.

The protein belongs to the class-I aminoacyl-tRNA synthetase family. MetG type 1 subfamily. In terms of assembly, monomer. The cofactor is Zn(2+).

The protein localises to the cytoplasm. It catalyses the reaction tRNA(Met) + L-methionine + ATP = L-methionyl-tRNA(Met) + AMP + diphosphate. Its function is as follows. Is required not only for elongation of protein synthesis but also for the initiation of all mRNA translation through initiator tRNA(fMet) aminoacylation. This chain is Methionine--tRNA ligase, found in Baumannia cicadellinicola subsp. Homalodisca coagulata.